A 392-amino-acid polypeptide reads, in one-letter code: MIDCRYYQQNECRSCQWLEIPCSQQLTEKQYHLKQQLISINYDEAQWVAPFQSNQQGFRNKAKMVVSGSVERPILGILKNPNDPQSAIDLCDCPLYPTHFSAIFSILKDFIGRAGLVPYNIAKQKGELKYILLTESIATEKLMLRFVLRTENKLPLIRRELPKLLEKLPHLEVISINLQPQHAAILEGEQEIFLTEQQFLPENFNGIPLFIRPRGFFQTNPKVAAGLYATAQQWVAEFPIYNLWDLFCGVGGFGLHCAKALQEKWGKPIKLTGIEISSSAILAASHSAKILGLEHVNFQSLDAASVIENKNENKPDLVIVNPPRRGIGKELSEFLNQIQPHFILYSSCNAMTMGKDLQHLTCYKPLKIQLFDMFPQTSHYEVLVLLERKKIN.

Positions 4, 12, 15, and 93 each coordinate [4Fe-4S] cluster. S-adenosyl-L-methionine-binding residues include glutamine 218, phenylalanine 247, glutamate 275, and asparagine 321. Cysteine 348 (nucleophile) is an active-site residue.

Belongs to the class I-like SAM-binding methyltransferase superfamily. RNA M5U methyltransferase family. RlmC subfamily.

The catalysed reaction is uridine(747) in 23S rRNA + S-adenosyl-L-methionine = 5-methyluridine(747) in 23S rRNA + S-adenosyl-L-homocysteine + H(+). Its function is as follows. Catalyzes the formation of 5-methyl-uridine at position 747 (m5U747) in 23S rRNA. This is 23S rRNA (uracil(747)-C(5))-methyltransferase RlmC from Haemophilus influenzae (strain ATCC 51907 / DSM 11121 / KW20 / Rd).